A 684-amino-acid polypeptide reads, in one-letter code: Ubinuclein-1 (684 aa).

5 disordered regions span residues 108–137 (YKGNDSSDGEELDGAPDDDEYDTEDSFIDD), 157–287 (YVNR…LGKS), 311–332 (NVTGSRQSSQASKKDGSNVKSK), 609–631 (MVDRSNQQQPEKLKGISSSCNPT), and 660–684 (PQTRVIPAPQNLNIPRTTPDLNLPS). Residues 114–137 (SDGEELDGAPDDDEYDTEDSFIDD) are compositionally biased toward acidic residues. 2 stretches are compositionally biased toward basic and acidic residues: residues 157 to 167 (YVNRGKLERME) and 184 to 199 (SAKPCRDAVDVSDKHT). Positions 211-235 (STAPGSWKTQESPLPSGAQDANTSV) are enriched in polar residues. Positions 238 to 260 (DDVKHSDRANHQSRNDTSHKSRE) are enriched in basic and acidic residues. Polar residues-rich tracts occupy residues 261 to 284 (TGSSSALHQKYSNKSLHQQSTSLL), 311 to 321 (NVTGSRQSSQA), 611 to 631 (DRSNQQQPEKLKGISSSCNPT), and 669 to 684 (QNLNIPRTTPDLNLPS).

It belongs to the ubinuclein family. As to quaternary structure, component of the HIRA complex made of UBN1, UBN2, ASF1A, CABIN1 and HIRA. Interacts with HIRA.

Its subcellular location is the nucleus. It is found in the nucleolus. May be required for replication-independent chromatin assembly. In Arabidopsis thaliana (Mouse-ear cress), this protein is Ubinuclein-1.